A 264-amino-acid chain; its full sequence is Thymidylate synthase (264 aa).

Position 21 (Arg-21) interacts with dUMP. His-51 contributes to the (6R)-5,10-methylene-5,6,7,8-tetrahydrofolate binding site. Residue 126–127 coordinates dUMP; that stretch reads RR. Catalysis depends on Cys-146, which acts as the Nucleophile. Residues 166-169, Asn-177, and 207-209 contribute to the dUMP site; these read RSAD and HLY. Asp-169 serves as a coordination point for (6R)-5,10-methylene-5,6,7,8-tetrahydrofolate. Ala-263 provides a ligand contact to (6R)-5,10-methylene-5,6,7,8-tetrahydrofolate.

This sequence belongs to the thymidylate synthase family. Bacterial-type ThyA subfamily. Homodimer.

The protein resides in the cytoplasm. The catalysed reaction is dUMP + (6R)-5,10-methylene-5,6,7,8-tetrahydrofolate = 7,8-dihydrofolate + dTMP. It participates in pyrimidine metabolism; dTTP biosynthesis. In terms of biological role, catalyzes the reductive methylation of 2'-deoxyuridine-5'-monophosphate (dUMP) to 2'-deoxythymidine-5'-monophosphate (dTMP) while utilizing 5,10-methylenetetrahydrofolate (mTHF) as the methyl donor and reductant in the reaction, yielding dihydrofolate (DHF) as a by-product. This enzymatic reaction provides an intracellular de novo source of dTMP, an essential precursor for DNA biosynthesis. The chain is Thymidylate synthase from Chromobacterium violaceum (strain ATCC 12472 / DSM 30191 / JCM 1249 / CCUG 213 / NBRC 12614 / NCIMB 9131 / NCTC 9757 / MK).